A 642-amino-acid polypeptide reads, in one-letter code: Tigger transposable element-derived protein 5 (642 aa).

Composition is skewed to pro residues over residues 1–10 (MYPAGPPAGP) and 19–43 (LPGP…PGPR). A disordered region spans residues 1 to 45 (MYPAGPPAGPVPRRGRRPLPGPPAPAPAPVPAARPPPPAPGPRPR). In terms of domain architecture, HTH psq-type spans 47–98 (AVKMAFRKAYSIKDKLQAIERVKGGERQASVCRDFGVPGGTLRGWLKDEPKL). 2 DNA-binding regions (H-T-H motif) span residues 74–94 (QASV…WLKD) and 145–178 (PLIQ…WQKR). Residues 112–185 (QRKKMRLANE…QKRHGISSQR (74 aa)) form the HTH CENPB-type domain. The interval 185-233 (RFYGEAGPPAPSPAPGPPVKEEPALPSGAGPLPDRAPAPPPPAEGGYGD) is disordered. 2 stretches are compositionally biased toward pro residues: residues 192 to 202 (PPAPSPAPGPP) and 218 to 227 (DRAPAPPPPA). DDE-1 domains lie at 233 to 357 (DEQI…VLLV) and 410 to 477 (RAHI…ERCW). Residues 535–587 (LDDDGGPPEGCREEVGPALPPAAPPAPASLPSAMGGGEDEEEATDYGGTSVPT) form a disordered region. The span at 552–562 (ALPPAAPPAPA) shows a compositional bias: pro residues.

Belongs to the tigger transposable element derived protein family.

It is found in the nucleus. This Homo sapiens (Human) protein is Tigger transposable element-derived protein 5 (TIGD5).